The sequence spans 954 residues: MTQKFEMADRFNPSAVEQALYQHWEESGYFKPSGNENAPSYCIAIPPPNVTGSLHMGHAFQQTLMDTLIRFNRMEGHNTLWQAGTDHAGIATQMVVERKIGAEEGKTRHDYGREAFINKIWDWKAYSGGTISQQMRRLGNSIDWERERFTMDDGLSNAVKEVFVRLHEEGLIYRGKRLVNWDPKLHTAISDLEVENKESKGSLWHFRYPLANGAKTADGKDYLVVATTRPETMLGDTAVAVHPEDERYQSLIGKTVVLPLANREIPIIADEYVDREFGTGVVKITPAHDFNDYEVGKRHGLPMVNVLTLNADIRDEAEIIGTDGKPLAGYEATIPADYRGLERFAARKKIVADFESLGLLDEIKPHDLKVPYGDRGGVPIEPMLTDQWYVSVKPLADVAIKAVEDCEIQFVPKQYENLYFSWMRDIQDWCISRQLWWGHRIPAWYDTEGNVYVARNETEVRSKYNLDFAVELKQDEDVLDTWFSSGLWTFSTLGWPEQTKELKMFHPTDVLITGFDIIFFWVARMIMFTMHFVKDENGKPQVPFKTVYVTGLIRDEQGQKMSKSKGNVLDPIDMIDGISLDDLLEKRTGNMMQPQLAEKIAKATRKEFADGIAAHGTDALRFTLAALASNGRDINWDMKRLEGYRNFCNKLWNASRFVLTNDKLDLSEGEIEFSLADRWIQSEFNRTVETFRNSLSQYRFDLCANAIYEFTWNQFCDWYLELTKPVFANGNAAQIRAASQTLVHVLEKLLRLAHPLIPFITEEIWQKVKGFVGITADSIMLQPFPQVEESGFDLEAEAEIEWLKEVIVAVRNIRAESNIAPSKGLDLLFRNLSTENAKILEKQTALLKAMAKLDNVQVLAANETAPLAVAKLVGNAELLVPMAGFINKEAELARLTKEIEKYQNEVKRIENKLSNEAFVAKAPEAVIAKEREKQAEYQSGLEKIQEQYKAIEAL.

A 'HIGH' region motif is present at residues 48–58; the sequence is PNVTGSLHMGH. The 'KMSKS' region signature appears at 560–564; that stretch reads KMSKS. Lysine 563 is a binding site for ATP. The stretch at 883–953 forms a coiled coil; it reads AGFINKEAEL…IQEQYKAIEA (71 aa).

It belongs to the class-I aminoacyl-tRNA synthetase family. ValS type 1 subfamily. As to quaternary structure, monomer.

It localises to the cytoplasm. The enzyme catalyses tRNA(Val) + L-valine + ATP = L-valyl-tRNA(Val) + AMP + diphosphate. Its function is as follows. Catalyzes the attachment of valine to tRNA(Val). As ValRS can inadvertently accommodate and process structurally similar amino acids such as threonine, to avoid such errors, it has a 'posttransfer' editing activity that hydrolyzes mischarged Thr-tRNA(Val) in a tRNA-dependent manner. The sequence is that of Valine--tRNA ligase from Haemophilus influenzae (strain PittEE).